The sequence spans 390 residues: (S)-8-oxocitronellyl enol synthase CYC2 (390 aa).

Residues 35-37 (TGI), 63-64 (RR), 81-82 (DI), 105-106 (TW), and Gln143 contribute to the NADP(+) site. Residues Lys147 and Tyr179 contribute to the active site. Residues Lys147 and Tyr179 each coordinate substrate. NADP(+) is bound by residues Tyr179 and 213-215 (SMM).

This sequence belongs to the short-chain dehydrogenases/reductases (SDR) family. Highly divergent.

The catalysed reaction is (S)-8-oxocitronellyl enol + NADP(+) = (6E)-8-oxogeranial + NADPH + H(+). It carries out the reaction (S)-8-oxocitronellyl enol + NAD(+) = (6E)-8-oxogeranial + NADH + H(+). Iridoid synthase that catalyzes the first step in generation of the iridoid ring scaffold using the linear monoterpene (6E)-8-oxogeranial as substrate. Iridoids comprise a large family of distinctive bicyclic monoterpenes that possess a wide range of pharmacological activities, including anticancer, anti-inflammatory, antifungal and antibacterial activities. The protein is (S)-8-oxocitronellyl enol synthase CYC2 of Camptotheca acuminata (Happy tree).